The primary structure comprises 156 residues: Cytochrome c-type biogenesis protein CcmE 2 (156 aa).

The Cytoplasmic segment spans residues 1–8 (MNPQRRRR). The chain crosses the membrane as a helical; Signal-anchor for type II membrane protein span at residues 9 to 29 (LWLVLALVLAGGLATTLVAMA). Topologically, residues 30-156 (LQRNVAYLYT…AAAGQVGERQ (127 aa)) are periplasmic. H123 and Y127 together coordinate heme. Residues 136–156 (MGSAHRKHDVPAAAGQVGERQ) form a disordered region.

This sequence belongs to the CcmE/CycJ family.

It is found in the cell inner membrane. Functionally, heme chaperone required for the biogenesis of c-type cytochromes. Transiently binds heme delivered by CcmC and transfers the heme to apo-cytochromes in a process facilitated by CcmF and CcmH. The protein is Cytochrome c-type biogenesis protein CcmE 2 of Xanthomonas axonopodis pv. citri (strain 306).